The chain runs to 537 residues: MSTAVRPDEISAILRKQLSGFDSEVDVYDVGTVLQVGDGIARIYGLSKVAAGELVEFPHNVTGMVLNLEEDNVGAVLFGSSDLIKEGDTVKRTKILASIPVGEAMLGRVINPLGEPIDGKGAIKTEIRLPLERRAPGVIFRHPVKEPLQTGLKAIDSMIPIGRGQRELIIGDRQTGKTAVAIDTIINQKASHTKEAQEKGAKPVYCIYVATGQKASTVAQVVNILEKHGAMEYTTVISATASDPAPLQFISPYAGATLGEYFRDTGRHALVIYDDLSKQAVAYRQVSLLLRRPPGREAYPGDVFYLHSRLLERAARITNDDALAKQMNDLPDSIKPMAKGGGSLTALPIIETQAGDVSAYIPTNVISITDGQIFLESNLFNSGQRPAINVGISVSRVGGSAQIKGMKKVAGTLRLDLAQYRELEAFAKFGSDLDKATQAQLTRGGRLVEILKQGQYVPMAVEKQVAILFVGTQGILDTLPANLVRKFEVAFLEMLELKHKDILNTIATAGQMDADTQKKLRQVAEQFLETFKQANVK.

171–178 (GDRQTGKT) contributes to the ATP binding site.

This sequence belongs to the ATPase alpha/beta chains family. As to quaternary structure, F-type ATPases have 2 components, CF(1) - the catalytic core - and CF(0) - the membrane proton channel. CF(1) has five subunits: alpha(3), beta(3), gamma(1), delta(1), epsilon(1). CF(0) has four main subunits: a, b, b' and c.

It is found in the cell inner membrane. It catalyses the reaction ATP + H2O + 4 H(+)(in) = ADP + phosphate + 5 H(+)(out). Functionally, produces ATP from ADP in the presence of a proton gradient across the membrane. The alpha chain is a regulatory subunit. The chain is ATP synthase subunit alpha from Chloroherpeton thalassium (strain ATCC 35110 / GB-78).